Consider the following 937-residue polypeptide: Protein translocase subunit SecA (937 aa).

ATP contacts are provided by residues Gln90, 108 to 112 (GEGKT), and Asp509.

This sequence belongs to the SecA family. In terms of assembly, monomer and homodimer. Part of the essential Sec protein translocation apparatus which comprises SecA, SecYEG and auxiliary proteins SecDF. Other proteins may also be involved.

The protein resides in the cell inner membrane. The protein localises to the cellular thylakoid membrane. Its subcellular location is the cytoplasm. It catalyses the reaction ATP + H2O + cellular proteinSide 1 = ADP + phosphate + cellular proteinSide 2.. Part of the Sec protein translocase complex. Interacts with the SecYEG preprotein conducting channel. Has a central role in coupling the hydrolysis of ATP to the transfer of proteins into and across the cell membrane, serving as an ATP-driven molecular motor driving the stepwise translocation of polypeptide chains across the membrane. Functionally, probably participates in protein translocation into and across both the cytoplasmic and thylakoid membranes in cyanobacterial cells. The chain is Protein translocase subunit SecA from Synechococcus sp. (strain CC9902).